We begin with the raw amino-acid sequence, 213 residues long: Uridine kinase (213 aa).

ATP is bound at residue 14–21 (GASASGKS).

This sequence belongs to the uridine kinase family.

It localises to the cytoplasm. It carries out the reaction uridine + ATP = UMP + ADP + H(+). The enzyme catalyses cytidine + ATP = CMP + ADP + H(+). It participates in pyrimidine metabolism; CTP biosynthesis via salvage pathway; CTP from cytidine: step 1/3. The protein operates within pyrimidine metabolism; UMP biosynthesis via salvage pathway; UMP from uridine: step 1/1. The polypeptide is Uridine kinase (Vibrio vulnificus (strain CMCP6)).